The following is a 244-amino-acid chain: 2-C-methyl-D-erythritol 4-phosphate cytidylyltransferase (244 aa).

This sequence belongs to the IspD/TarI cytidylyltransferase family. IspD subfamily.

The catalysed reaction is 2-C-methyl-D-erythritol 4-phosphate + CTP + H(+) = 4-CDP-2-C-methyl-D-erythritol + diphosphate. It participates in isoprenoid biosynthesis; isopentenyl diphosphate biosynthesis via DXP pathway; isopentenyl diphosphate from 1-deoxy-D-xylulose 5-phosphate: step 2/6. Functionally, catalyzes the formation of 4-diphosphocytidyl-2-C-methyl-D-erythritol from CTP and 2-C-methyl-D-erythritol 4-phosphate (MEP). This is 2-C-methyl-D-erythritol 4-phosphate cytidylyltransferase from Prosthecochloris aestuarii (strain DSM 271 / SK 413).